The following is a 369-amino-acid chain: Endophilin-A (369 aa).

Residues 18-248 (TEKMGGAEGT…LQEKRAEAES (231 aa)) enclose the BAR domain. Positions 227–249 (QCADVLRGLQETLQEKRAEAESR) form a coiled coil. Over residues 275-294 (GTPSHISSSASPLPSPMRSP) the composition is skewed to low complexity. Positions 275 to 297 (GTPSHISSSASPLPSPMRSPAKS) are disordered. Positions 305–364 (QQQPCCQALYDFDPENPGELGFKENDIITLLNRVDDNWYEGAVNGRTGYFPQSYVQVQVP) constitute an SH3 domain.

This sequence belongs to the endophilin family.

Its subcellular location is the cytoplasm. The protein localises to the membrane. Functionally, required presynaptically at the neuromuscular junction. Implicated in synaptic vesicle endocytosis. In Drosophila virilis (Fruit fly), this protein is Endophilin-A.